The following is a 213-amino-acid chain: Oxidase ustYa (213 aa).

The tract at residues 1 to 26 is disordered; the sequence is MAERSSNGYKEVPVRQSEESTIAEEE. The chain crosses the membrane as a helical span at residues 48–68; it reads AVWFLIALLLLSNIGLLGGLI. N-linked (GlcNAc...) asparagine glycosylation is present at N98. Short sequence motifs (HXXHC) lie at residues 123–127 and 150–154; these read HQLHC and HLMHC.

Belongs to the ustYa family.

It localises to the membrane. It participates in mycotoxin biosynthesis. Its function is as follows. Oxidase; part of the gene cluster that mediates the biosynthesis of the secondary metabolite ustiloxin B, an antimitotic tetrapeptide. First, ustA is processed by the subtilisin-like endoprotease Kex2 that is outside the ustiloxin B gene cluster, at the C-terminal side of Arg-Lys, after transfer to Golgi apparatus through the endoplasmic reticulum (ER). Cleavage by KEX2 generates 16 peptides YAIG-I to YAIG-XVI. To process the precursor peptide further, at least two peptidases are necessary to cleave the N-terminal and C-terminal sides of the Tyr-Ala-Ile-Gly core peptide which serves as backbone for the synthesis of ustiloxin B, through cyclization and modification of the tyrosine with a non-protein coding amino acid, norvaline. One of the two peptidases must be the serine peptidase ustP; and the other pepdidase is probably ustH. Macrocyclization of the core peptide derived from ustA requires the tyrosinase ustQ, as well as the homologous oxidases ustYa and ustYb, and leads to the production of the first cyclization product N-desmethylustiloxin F. For the formation of N-desmethylustiloxin F, three oxidation steps are required, hydroxylation at the benzylic position, hydroxylation at either the aromatic ring of Tyr or beta-position of Ile, and oxidative cyclization. UstQ may catalyze the oxidation of a phenol moiety, whereas the ustYa and ustYb are most likely responsible for the remaining two-step oxidations. N-desmethylustiloxin F is then methylated by ustM to yield ustiloxin F which in turn substrate of the cytochrome P450 monooxygenase ustC which catalyzes the formation of S-deoxyustiloxin H. The flavoprotein monooxygenases ustF1 and ustF2 then participate in the modification of the side chain of S-deoxyustiloxin H, leading to the synthesis of an oxime intermediate, via ustiloxin H. Finally, carboxylative dehydration performed by the cysteine desulfurase-like protein ustD yields ustiloxin B. The protein is Oxidase ustYa of Aspergillus flavus (strain ATCC 200026 / FGSC A1120 / IAM 13836 / NRRL 3357 / JCM 12722 / SRRC 167).